The sequence spans 438 residues: Coenzyme A disulfide reductase (438 aa).

Position 8-33 (8-33 (GAVAGGATCASQIRRLDKESDIIIFE)) interacts with FAD. 5 residues coordinate substrate: Thr15, Gln19, Arg22, Ser39, and Asn42. The Nucleophile role is filled by Cys43. Catalysis depends on Cys43, which acts as the Redox-active. Lys71 serves as a coordination point for substrate. 151 to 166 (VLVVGAGYVSLEVLEN) contacts NADP(+). 267–277 (TNVPNIYAIGD) provides a ligand contact to FAD. His299 is a binding site for substrate. Tyr419 serves as a coordination point for FAD. Substrate is bound at residue Lys427.

Belongs to the class-III pyridine nucleotide-disulfide oxidoreductase family. As to quaternary structure, homodimer. The cofactor is FAD.

The catalysed reaction is NADP(+) + 2 CoA = CoA-disulfide + NADPH + H(+). Functionally, catalyzes specifically the NADPH-dependent reduction of coenzyme A disulfide. The chain is Coenzyme A disulfide reductase from Staphylococcus aureus (strain COL).